The following is a 253-amino-acid chain: Sulfate transporter CysZ (253 aa).

A run of 4 helical transmembrane segments spans residues 31-51 (FVILPLLVNILLMGGAFWWLF), 75-95 (LLWPLAVISVLLVFGYFFSTI), 151-171 (IVLLILYFIPGIGQTVAPVLW), and 222-242 (IPLLNLFIMPVAVCGATAMWV).

This sequence belongs to the CysZ family.

It is found in the cell inner membrane. In terms of biological role, high affinity, high specificity proton-dependent sulfate transporter, which mediates sulfate uptake. Provides the sulfur source for the cysteine synthesis pathway. The sequence is that of Sulfate transporter CysZ from Shigella flexneri serotype 5b (strain 8401).